A 383-amino-acid polypeptide reads, in one-letter code: Delta(12) acyl-lipid conjugase (11E,13E-forming) (383 aa).

Residues 1–30 form a disordered region; it reads MGEVGPTNRTKTKLDKQQESENRVPHEPPP. Over residues 12–26 the composition is skewed to basic and acidic residues; it reads TKLDKQQESENRVPH. 2 helical membrane passes run 56–76 and 84–104; these read VIHD…YIPM and VAWP…LVLG. The Histidine box-1 signature appears at 105 to 109; sequence HECGH. The short motif at 141-145 is the Histidine box-2 element; that stretch reads HRRHH. 3 helical membrane-spanning segments follow: residues 179-199, 225-245, and 249-269; these read FLMI…FNAN, VIAS…IALA, and VWLI…IVLI. Positions 315–319 match the Histidine box-3 motif; sequence HLVHH.

The protein belongs to the fatty acid desaturase type 1 family. Expressed in developing seeds, but not in leaves.

It localises to the membrane. The catalysed reaction is a (9Z,12Z)-octadecadienoyl-containing glycerolipid + 2 Fe(II)-[cytochrome b5] + O2 + 2 H(+) = a (9Z,11E,13E)-octadecatrienoyl-containing glycerolipid + 2 Fe(III)-[cytochrome b5] + 2 H2O. The enzyme catalyses (9Z,12Z,15Z)-octadecatrienoyl-containing glycerolipid + 2 Fe(II)-[cytochrome b5] + O2 + 2 H(+) = a (9Z,11E,13E,15Z)-octadecatetraenoyl-containing glycerolipid + 2 Fe(III)-[cytochrome b5] + 2 H2O. It participates in lipid metabolism; polyunsaturated fatty acid biosynthesis. Functionally, converts linoleic acid to alpha-eleostearic acid (18:3(9Z,11E,13E)) and alpha-linolenic acid to alpha-parinaric acid (18:4(9Z,11E, 13E, 15Z)). Converts a single cis double bond at carbon 12 to two conjugated trans bonds at positions 11 and 13. This Impatiens balsamina (Balsam) protein is Delta(12) acyl-lipid conjugase (11E,13E-forming).